A 732-amino-acid polypeptide reads, in one-letter code: B-cadherin (732 aa).

Residues leucine 1–arginine 6 constitute a propeptide that is removed on maturation. Cadherin domains lie at arginine 6 to phenylalanine 114, threonine 115 to phenylalanine 227, aspartate 228 to phenylalanine 339, aspartate 340 to histidine 443, and glycine 444 to threonine 554. The Extracellular portion of the chain corresponds to arginine 6 to threonine 554. Asparagine 137 is a glycosylation site (N-linked (GlcNAc...) asparagine). N-linked (GlcNAc...) asparagine glycosylation occurs at asparagine 410. A helical transmembrane segment spans residues glycine 555–valine 580. Over arginine 581–glutamate 732 the chain is Cytoplasmic.

In terms of tissue distribution, expressed in a wide variety of tissues.

Its subcellular location is the cell membrane. In terms of biological role, cadherins are calcium-dependent cell adhesion proteins. They preferentially interact with themselves in a homophilic manner in connecting cells; cadherins may thus contribute to the sorting of heterogeneous cell types. B-cadherin may have important functions in neurogenesis, in at least some epithelia, and in embryogenesis. This chain is B-cadherin (K-CAM), found in Gallus gallus (Chicken).